The chain runs to 114 residues: Cuticle protein CP1158 (114 aa).

A Pyrrolidone carboxylic acid modification is found at glutamine 1. Tandem repeats lie at residues 1-17, 26-43, 70-87, and 95-112.

In terms of tissue distribution, calcified shell.

This chain is Cuticle protein CP1158, found in Cancer pagurus (Rock crab).